Here is a 308-residue protein sequence, read N- to C-terminus: Protein Bel-1 (308 aa).

A DNA-binding region spans residues 94–203 (SKSTCKRLIL…KGTRLPKRRC (110 aa)). Positions 200–242 (KRRCNPSRRYETFREHPPTRKRRSKEGIPTDQQPSTSNGDPMA) are disordered. Residues 207-217 (RRYETFREHPP) show a composition bias toward basic and acidic residues. The short motif at 217–226 (PTRKRRSKEG) is the Nuclear localization signal element. The tract at residues 228-304 (PTDQQPSTSN…PLGSSEDQLL (77 aa)) is transactivation domain. Over residues 229–238 (TDQQPSTSNG) the composition is skewed to polar residues.

As to quaternary structure, homodimer or homomultimer. Forms complexes with the host nuclear factors NFIA, NFIB, NFIC or NFIX.

Its subcellular location is the host nucleus. In terms of biological role, transcriptional transactivator that activates the viral internal promoter (IP), thereby enhancing its own expression. This transactivation is repressed by nuclear factor I. Also transactivates the long terminal repeat (LTR) promoter, thereby inducing structural gene expression, initiating the late phase of infection. It is therefore a key regulator of viral gene expression. It directly binds to and activates DNA target sites of viral promoters and those of distinct cellular genes. Required for viral replication. The polypeptide is Protein Bel-1 (bel1) (Simian foamy virus type 1 (SFVmac)).